The primary structure comprises 948 residues: Protocadherin alpha-2 (948 aa).

A signal peptide spans 1 to 22 (MASSIRRGLGAWTRLLSLLLLA). The Extracellular segment spans residues 23 to 697 (AWEVGSGQLR…GSEATLVDVN (675 aa)). Cadherin domains lie at 30-133 (QLRY…PPVF), 157-242 (ASDA…EPTF), 243-350 (AQSV…TPEV), 351-455 (SITS…APAF), 456-565 (AQPE…APAL), and 588-678 (GHVV…APKA). N-linked (GlcNAc...) asparagine glycosylation is found at N257, N265, N362, and N548. Residues 698 to 718 (VYLIIAICAVSSLLVLTVLLY) form a helical membrane-spanning segment. The Cytoplasmic segment spans residues 719–948 (TALRCSVPAT…GNSTTDNSDQ (230 aa)). One copy of the PXXP 1 repeat lies at 734 to 737 (PGKP). Positions 734 to 892 (PGKPTLVCSS…PDKFIIPGSP (159 aa)) are 5 X 4 AA repeats of P-X-X-P. 3 disordered regions span residues 755 to 801 (RQRV…RQPN), 829 to 854 (GPGG…EVSP), and 868 to 948 (KYGP…NSDQ). The segment covering 783–795 (AEEKQLSESEYVG) has biased composition (basic and acidic residues). PXXP repeat units lie at residues 797–800 (PRQP), 830–833 (PGGP), 871–874 (PGNP), and 889–892 (PGSP). Positions 907–921 (DKSDFITFGKKEETK) are enriched in basic and acidic residues.

It is found in the cell membrane. Potential calcium-dependent cell-adhesion protein. May be involved in the establishment and maintenance of specific neuronal connections in the brain. The protein is Protocadherin alpha-2 (PCDHA2) of Pan troglodytes (Chimpanzee).